A 296-amino-acid polypeptide reads, in one-letter code: Phosphoribosylaminoimidazole-succinocarboxamide synthase (296 aa).

The protein belongs to the SAICAR synthetase family.

The catalysed reaction is 5-amino-1-(5-phospho-D-ribosyl)imidazole-4-carboxylate + L-aspartate + ATP = (2S)-2-[5-amino-1-(5-phospho-beta-D-ribosyl)imidazole-4-carboxamido]succinate + ADP + phosphate + 2 H(+). It participates in purine metabolism; IMP biosynthesis via de novo pathway; 5-amino-1-(5-phospho-D-ribosyl)imidazole-4-carboxamide from 5-amino-1-(5-phospho-D-ribosyl)imidazole-4-carboxylate: step 1/2. The sequence is that of Phosphoribosylaminoimidazole-succinocarboxamide synthase from Citrifermentans bemidjiense (strain ATCC BAA-1014 / DSM 16622 / JCM 12645 / Bem) (Geobacter bemidjiensis).